The sequence spans 128 residues: Protein ApaG (128 aa).

The 123-residue stretch at 1-123 folds into the ApaG domain; sequence MTSSPDITVS…FRLDIAPESG (123 aa).

This Deinococcus radiodurans (strain ATCC 13939 / DSM 20539 / JCM 16871 / CCUG 27074 / LMG 4051 / NBRC 15346 / NCIMB 9279 / VKM B-1422 / R1) protein is Protein ApaG.